The primary structure comprises 290 residues: Shikimate dehydrogenase (NADP(+)) (290 aa).

Shikimate is bound by residues 20-22 and T67; that span reads SLS. K71 (proton acceptor) is an active-site residue. 2 residues coordinate shikimate: N92 and D107. Residues 130 to 134 and L227 contribute to the NADP(+) site; that span reads GAGGA. Shikimate is bound at residue Y229. Position 250 (G250) interacts with NADP(+).

This sequence belongs to the shikimate dehydrogenase family. In terms of assembly, homodimer.

The enzyme catalyses shikimate + NADP(+) = 3-dehydroshikimate + NADPH + H(+). It participates in metabolic intermediate biosynthesis; chorismate biosynthesis; chorismate from D-erythrose 4-phosphate and phosphoenolpyruvate: step 4/7. In terms of biological role, involved in the biosynthesis of the chorismate, which leads to the biosynthesis of aromatic amino acids. Catalyzes the reversible NADPH linked reduction of 3-dehydroshikimate (DHSA) to yield shikimate (SA). The protein is Shikimate dehydrogenase (NADP(+)) of Syntrophomonas wolfei subsp. wolfei (strain DSM 2245B / Goettingen).